The sequence spans 69 residues: DNA gyrase inhibitor YacG (69 aa).

The Zn(2+) site is built by cysteine 14, cysteine 17, cysteine 33, and cysteine 37.

Belongs to the DNA gyrase inhibitor YacG family. As to quaternary structure, interacts with GyrB. Zn(2+) serves as cofactor.

Inhibits all the catalytic activities of DNA gyrase by preventing its interaction with DNA. Acts by binding directly to the C-terminal domain of GyrB, which probably disrupts DNA binding by the gyrase. The polypeptide is DNA gyrase inhibitor YacG (Aliivibrio salmonicida (strain LFI1238) (Vibrio salmonicida (strain LFI1238))).